Reading from the N-terminus, the 58-residue chain is Sperm protamine P2 (58 aa).

A disordered region spans residues 1-58 (RRRRRRGKGRGKKRKGKGKKRGKGRRRGSKGRKKKKGKGKKRKRRRRRRRKGSKGKGK).

In terms of tissue distribution, gonads.

The protein localises to the nucleus. Its subcellular location is the chromosome. Its function is as follows. Protamines substitute for histones in the chromatin of sperm during the haploid phase of spermatogenesis. They compact sperm DNA into a highly condensed, stable and inactive complex. The sequence is that of Sperm protamine P2 from Bolinus brandaris (Purple dye murex).